A 385-amino-acid polypeptide reads, in one-letter code: Heterogeneous nuclear ribonucleoprotein 87F (385 aa).

RRM domains follow at residues 24-101 (RKLF…RAVP) and 115-192 (KKLF…KAIA). 2 disordered regions span residues 192–289 (AKQD…WNGG) and 305–385 (GNGG…NRRY). Gly residues-rich tracts occupy residues 199-289 (QGGG…WNGG) and 305-317 (GNGG…GGFG). Residues 319–336 (EYQQSYGGGPQRNSNFGN) are compositionally biased toward polar residues. Gly residues-rich tracts occupy residues 344 to 362 (QGGG…GQGF) and 369 to 385 (TGGG…NRRY).

The protein resides in the nucleus. The protein localises to the cytoplasm. Functionally, this protein is a component of ribonucleosomes. Could be needed to organize a concentration gradient of a dorsalizing morphogen (Dm) originating in the germinal vesicle. This chain is Heterogeneous nuclear ribonucleoprotein 87F (Hrb87F), found in Drosophila melanogaster (Fruit fly).